Consider the following 71-residue polypeptide: U-scoloptoxin(21)-Sm1a (71 aa).

A signal peptide spans 1 to 21 (MKSVIFALFLVYLLIVRAAEA). The interval 45-71 (IELANDPNGPGRRRRAPAENEDFLKHS) is disordered. The segment covering 60-71 (APAENEDFLKHS) has biased composition (basic and acidic residues).

This sequence belongs to the scoloptoxin-21 family. As to expression, expressed by the venom gland.

It is found in the secreted. The protein is U-scoloptoxin(21)-Sm1a of Scolopendra morsitans (Tanzanian blue ringleg centipede).